The sequence spans 190 residues: UPF0301 protein Pfl01_5311 (190 aa).

Belongs to the UPF0301 (AlgH) family.

This is UPF0301 protein Pfl01_5311 from Pseudomonas fluorescens (strain Pf0-1).